We begin with the raw amino-acid sequence, 249 residues long: Fasciclin-like arabinogalactan protein 12 (249 aa).

The signal sequence occupies residues 1-24 (MEHSLIILLFTVLLLLTTTPGILS). Residues 37-181 (PTNVTKILEK…LAVYQVDKVL (145 aa)) enclose the FAS1 domain. Residues asparagine 39, asparagine 71, asparagine 143, asparagine 152, and asparagine 159 are each glycosylated (N-linked (GlcNAc...) asparagine). The tract at residues 186 to 219 (VFDPRPPAPAPAPSVSKSKKKKDDSDSSSDDSPA) is disordered. Aspartate 220 carries the GPI-anchor amidated aspartate lipid modification. Residues 221–249 (ASFALRNVGSVCDAVSFCVMSVMLAWFYL) constitute a propeptide, removed in mature form.

It belongs to the fasciclin-like AGP family.

It localises to the cell membrane. In terms of biological role, may be a cell surface adhesion protein. The chain is Fasciclin-like arabinogalactan protein 12 (FLA12) from Arabidopsis thaliana (Mouse-ear cress).